A 435-amino-acid polypeptide reads, in one-letter code: Serine--tRNA ligase (435 aa).

241-243 contacts L-serine; the sequence is TAE. 272–274 contacts ATP; it reads RSE. Glutamate 295 is an L-serine binding site. 359–362 provides a ligand contact to ATP; it reads EISS. Serine 395 provides a ligand contact to L-serine.

It belongs to the class-II aminoacyl-tRNA synthetase family. Type-1 seryl-tRNA synthetase subfamily. In terms of assembly, homodimer. The tRNA molecule binds across the dimer.

The protein resides in the cytoplasm. The catalysed reaction is tRNA(Ser) + L-serine + ATP = L-seryl-tRNA(Ser) + AMP + diphosphate + H(+). It catalyses the reaction tRNA(Sec) + L-serine + ATP = L-seryl-tRNA(Sec) + AMP + diphosphate + H(+). It participates in aminoacyl-tRNA biosynthesis; selenocysteinyl-tRNA(Sec) biosynthesis; L-seryl-tRNA(Sec) from L-serine and tRNA(Sec): step 1/1. Catalyzes the attachment of serine to tRNA(Ser). Is also able to aminoacylate tRNA(Sec) with serine, to form the misacylated tRNA L-seryl-tRNA(Sec), which will be further converted into selenocysteinyl-tRNA(Sec). This is Serine--tRNA ligase from Actinobacillus pleuropneumoniae serotype 7 (strain AP76).